Consider the following 179-residue polypeptide: Coiled-coil domain-containing protein 32 (179 aa).

The stretch at 75–98 forms a coiled coil; it reads EVYLASLEKKLRRIKGLNEEVTSK. Residues 157-179 are disordered; sequence FLIPPESQAEKPEARDEPAAAEQ. Over residues 164 to 179 the composition is skewed to basic and acidic residues; it reads QAEKPEARDEPAAAEQ.

Interacts with AP2S1; the interaction is direct and mediates association with adaptor protein complex 2 (AP-2).

It is found in the membrane. Its subcellular location is the coated pit. In terms of biological role, regulates clathrin-mediated endocytsois of cargos such as transferrin probably through the association and modulation of adaptor protein complex 2 (AP-2). Has a role in ciliogenesis. Required for proper cephalic and left/right axis development. This is Coiled-coil domain-containing protein 32 (Ccdc32) from Rattus norvegicus (Rat).